A 1117-amino-acid polypeptide reads, in one-letter code: A disintegrin and metalloproteinase with thrombospondin motifs 6 (1117 aa).

A signal peptide spans 1 to 21 (MEILWKTLTWILSLIMASSEF). The propeptide occupies 22 to 244 (HSDHRLSYSS…NTHIHHRQKR (223 aa)). Residues asparagine 99, asparagine 172, asparagine 222, and asparagine 234 are each glycosylated (N-linked (GlcNAc...) asparagine). One can recognise a Peptidase M12B domain in the interval 250–468 (RFVETLVVAD…GRGTCLDNEP (219 aa)). 11 disulfides stabilise this stretch: cysteine 326–cysteine 387, cysteine 362–cysteine 369, cysteine 381–cysteine 463, cysteine 420–cysteine 447, cysteine 490–cysteine 512, cysteine 501–cysteine 519, cysteine 507–cysteine 542, cysteine 532–cysteine 547, cysteine 570–cysteine 607, cysteine 574–cysteine 612, and cysteine 585–cysteine 597. Histidine 403 is a Zn(2+) binding site. Residue glutamate 404 is part of the active site. Residues histidine 407 and histidine 413 each contribute to the Zn(2+) site. In terms of domain architecture, Disintegrin spans 495-557 (GATSRQCKYG…VPFGTWPQSI (63 aa)). The TSP type-1 1 domain occupies 558–613 (DGGWGPWSLWGECSRTCGGGVSSSLRHCDSPAPSGGGKYCLGERKRYRSCNTDPCP). The segment at 717–843 (DAIEGFFNDS…GSGDNEVGFT (127 aa)) is spacer. A glycan (N-linked (GlcNAc...) asparagine) is linked at asparagine 724. TSP type-1 domains are found at residues 840 to 900 (VGFT…EPCP), 902 to 960 (EWFI…QSCP), 962 to 1007 (QWVA…SKPP), and 1018 to 1073 (PPPR…SKCD). Disulfide bonds link cysteine 911–cysteine 954, cysteine 915–cysteine 959, and cysteine 926–cysteine 943. Residue asparagine 956 is glycosylated (N-linked (GlcNAc...) asparagine). The PLAC domain occupies 1079–1117 (NTEECKDVNKVAYCPLVLKFKFCSRAYFRQMCCKTCQGH).

The cofactor is Zn(2+). The precursor is cleaved by a furin endopeptidase. Post-translationally, glycosylated. Can be O-fucosylated by POFUT2 on a serine or a threonine residue found within the consensus sequence C1-X(2)-(S/T)-C2-G of the TSP type-1 repeat domains where C1 and C2 are the first and second cysteine residue of the repeat, respectively. Fucosylated repeats can then be further glycosylated by the addition of a beta-1,3-glucose residue by the glucosyltransferase, B3GALTL. Fucosylation mediates the efficient secretion of ADAMTS family members. Can also be C-glycosylated with one or two mannose molecules on tryptophan residues within the consensus sequence W-X-X-W of the TPRs, and N-glycosylated. These other glycosylations can also facilitate secretion. Expressed at low levels in placenta and barely detectable in a number of other tissues.

The protein localises to the secreted. It is found in the extracellular space. Its subcellular location is the extracellular matrix. This Homo sapiens (Human) protein is A disintegrin and metalloproteinase with thrombospondin motifs 6 (ADAMTS6).